Reading from the N-terminus, the 274-residue chain is Large ribosomal subunit protein uL2 (274 aa).

Positions 224–274 (VAMNPVDHPHGGGEGRTSGGRHPVTPWGIPTKGYKTRRNKRSNKLIVQKRK) are disordered. Over residues 257 to 274 (YKTRRNKRSNKLIVQKRK) the composition is skewed to basic residues.

This sequence belongs to the universal ribosomal protein uL2 family. Part of the 50S ribosomal subunit. Forms a bridge to the 30S subunit in the 70S ribosome.

Its function is as follows. One of the primary rRNA binding proteins. Required for association of the 30S and 50S subunits to form the 70S ribosome, for tRNA binding and peptide bond formation. It has been suggested to have peptidyltransferase activity; this is somewhat controversial. Makes several contacts with the 16S rRNA in the 70S ribosome. This chain is Large ribosomal subunit protein uL2, found in Francisella tularensis subsp. mediasiatica (strain FSC147).